A 468-amino-acid chain; its full sequence is Uronate isomerase (468 aa).

Belongs to the metallo-dependent hydrolases superfamily. Uronate isomerase family.

It catalyses the reaction D-glucuronate = D-fructuronate. The enzyme catalyses aldehydo-D-galacturonate = keto-D-tagaturonate. It functions in the pathway carbohydrate metabolism; pentose and glucuronate interconversion. The sequence is that of Uronate isomerase from Endomicrobium trichonymphae.